The primary structure comprises 116 residues: UPF0654 protein C869.09 (116 aa).

The segment at 32 to 116 is disordered; sequence LKEHGSESHY…LLEEVDDESK (85 aa). Polar residues predominate over residues 39 to 48; sequence SHYTTGTTRG. Residues 49–64 are compositionally biased toward basic and acidic residues; it reads QKADADDAGELREEGF.

The protein belongs to the UPF0654 (con-6) family.

The protein localises to the cytoplasm. The protein resides in the nucleus. The chain is UPF0654 protein C869.09 from Schizosaccharomyces pombe (strain 972 / ATCC 24843) (Fission yeast).